Consider the following 215-residue polypeptide: MAVFLLDKPLFLHILTQLRDIKTDQIMFRKGMVRLGRLIGYEIANHLDFDIVKVVTPLGVEAKGVVIKDLDNIMIVNVLRAATPLVEGLLKAFPAAKQGVVAASRREMESSSPPTEMEVEITYMKIPKISKNDIAIIADPMIATASTMMRILGMVSQLQPKRIIIASVIASEYGITKIRNKYPDVDIFTVSIDPEINNRGYIVPGLGDAGDRSFG.

30-34 (KGMVR) contributes to the GTP binding site. Residues Arg80, Arg105, and 139–147 (DPMIATAST) contribute to the 5-phospho-alpha-D-ribose 1-diphosphate site. Uracil is bound by residues Ile202 and 207–209 (GDA). Asp208 is a binding site for 5-phospho-alpha-D-ribose 1-diphosphate.

Belongs to the UPRTase family. Mg(2+) serves as cofactor.

It catalyses the reaction UMP + diphosphate = 5-phospho-alpha-D-ribose 1-diphosphate + uracil. It functions in the pathway pyrimidine metabolism; UMP biosynthesis via salvage pathway; UMP from uracil: step 1/1. Allosterically activated by GTP. Its function is as follows. Catalyzes the conversion of uracil and 5-phospho-alpha-D-ribose 1-diphosphate (PRPP) to UMP and diphosphate. This is Uracil phosphoribosyltransferase from Metallosphaera sedula (strain ATCC 51363 / DSM 5348 / JCM 9185 / NBRC 15509 / TH2).